The following is a 404-amino-acid chain: Sorting nexin-5 (404 aa).

At alanine 2 the chain carries N-acetylalanine. In terms of domain architecture, PX spans 25 to 172 (LNVDPSLQID…HVFLEYDQDL (148 aa)). A 1,2-diacyl-sn-glycero-3-phospho-(1D-myo-inositol-4,5-bisphosphate) is bound by residues 40–46 (SERDKVK), 99–105 (FDGPREK), and 113–116 (EGSM). The tract at residues 169–261 (DQDLSVRRKN…HSLALEEPTV (93 aa)) is interaction with DOCK1. The tract at residues 183 to 200 (FGGFFKSVVKSADEVLFT) is membrane-binding amphipathic helix. Serine 193 is modified (phosphoserine). Positions 202 to 404 (VKEVDDFFEQ…QSCIDLFKNN (203 aa)) constitute a BAR domain. Lysine 275 is subject to N6-acetyllysine.

Belongs to the sorting nexin family. Forms heterodimers with BAR domain-containing sorting nexins SNX1 and SNX2; does not homodimerize. The heterodimers are proposed to self-assemble into helical arrays on the membrane to stabilize and expand local membrane curvature underlying endosomal tubule formation. Thought to be a component of the originally described retromer complex (also called SNX-BAR retromer) which is a pentamer containing the heterotrimeric retromer cargo-selective complex (CSC), also described as vacuolar protein sorting subcomplex (VPS), and a heterodimeric membrane-deforming subcomplex formed between SNX1 or SNX2 and SNX5 or SNX6 (also called SNX-BAR subcomplex); the respective CSC and SNX-BAR subcomplexes associate with low affinity. Interacts with SNX1, SNX2, VPS26A, VPS29, VPS35, DCTN1, DOCK1, MIB1, PIP5K1C isoform 3. Interacts with HGS; increased by PIP5K1C isoform 3 kinase activity and by PtdIns(3P) and/or PtdIns(3,4)P2. As to quaternary structure, (Microbial infection) Interacts with human cytomegalovirus proteins UL35 and UL35A; these interactions inhibit the ability of USP7 to form nuclear bodies.

Its subcellular location is the endosome. The protein localises to the early endosome. The protein resides in the early endosome membrane. It is found in the cell membrane. It localises to the cytoplasmic vesicle membrane. Its subcellular location is the cytoplasm. The protein localises to the cell projection. The protein resides in the phagocytic cup. It is found in the ruffle. Functionally, involved in several stages of intracellular trafficking. Interacts with membranes containing phosphatidylinositol 3-phosphate (PtdIns(3P)) or phosphatidylinositol 3,4-bisphosphate (PtdIns(3,4)P2). Acts in part as component of the retromer membrane-deforming SNX-BAR subcomplex. The SNX-BAR retromer mediates retrograde transport of cargo proteins from endosomes to the trans-Golgi network (TGN) and is involved in endosome-to-plasma membrane transport for cargo protein recycling. The SNX-BAR subcomplex functions to deform the donor membrane into a tubular profile called endosome-to-TGN transport carrier (ETC). Does not have in vitro vesicle-to-membrane remodeling activity. Involved in retrograde transport of lysosomal enzyme receptor IGF2R. May function as link between endosomal transport vesicles and dynactin. Plays a role in the internalization of EGFR after EGF stimulation. Involved in EGFR endosomal sorting and degradation; the function involves PIP5K1C isoform 3 and is retromer-independent. Together with PIP5K1C isoform 3 facilitates HGS interaction with ubiquitinated EGFR, which initiates EGFR sorting to intraluminal vesicles (ILVs) of the multivesicular body for subsequent lysosomal degradation. Involved in E-cadherin sorting and degradation; inhibits PIP5K1C isoform 3-mediated E-cadherin degradation. Plays a role in macropinocytosis. This Homo sapiens (Human) protein is Sorting nexin-5 (SNX5).